Here is a 678-residue protein sequence, read N- to C-terminus: Ribonuclease Z 2, mitochondrial (678 aa).

The transit peptide at 1 to 37 directs the protein to the mitochondrion; that stretch reads MKASLLVPRRALLFGQLLPPKYSWYSVKRWQSQLTFR.

It belongs to the RNase Z family. The cofactor is Zn(2+).

It is found in the mitochondrion. It localises to the cytoplasm. It carries out the reaction Endonucleolytic cleavage of RNA, removing extra 3' nucleotides from tRNA precursor, generating 3' termini of tRNAs. A 3'-hydroxy group is left at the tRNA terminus and a 5'-phosphoryl group is left at the trailer molecule.. Its function is as follows. Zinc phosphodiesterase, which displays some tRNA 3'-processing endonuclease activity. May be involved in tRNA maturation, by removing a 3'-trailer from precursor tRNA. This chain is Ribonuclease Z 2, mitochondrial (trz2), found in Schizosaccharomyces pombe (strain 972 / ATCC 24843) (Fission yeast).